The chain runs to 416 residues: Imidazolonepropionase (416 aa).

2 residues coordinate Fe(3+): H78 and H80. Zn(2+) contacts are provided by H78 and H80. 4-imidazolone-5-propanoate contacts are provided by R87, Y150, and H183. Y150 contacts N-formimidoyl-L-glutamate. A Fe(3+)-binding site is contributed by H248. Zn(2+) is bound at residue H248. 4-imidazolone-5-propanoate is bound at residue Q251. Residue D323 participates in Fe(3+) binding. D323 contacts Zn(2+). Positions 325 and 327 each coordinate N-formimidoyl-L-glutamate. T328 provides a ligand contact to 4-imidazolone-5-propanoate.

It belongs to the metallo-dependent hydrolases superfamily. HutI family. The cofactor is Zn(2+). It depends on Fe(3+) as a cofactor.

Its subcellular location is the cytoplasm. It carries out the reaction 4-imidazolone-5-propanoate + H2O = N-formimidoyl-L-glutamate. The protein operates within amino-acid degradation; L-histidine degradation into L-glutamate; N-formimidoyl-L-glutamate from L-histidine: step 3/3. Functionally, catalyzes the hydrolytic cleavage of the carbon-nitrogen bond in imidazolone-5-propanoate to yield N-formimidoyl-L-glutamate. It is the third step in the universal histidine degradation pathway. This chain is Imidazolonepropionase, found in Vibrio parahaemolyticus serotype O3:K6 (strain RIMD 2210633).